The sequence spans 72 residues: LITAF domain-containing protein (72 aa).

The region spanning 1-71 (MPVQAVCPYC…CQRELFYYHR (71 aa)) is the LITAF domain. Zn(2+) contacts are provided by cysteine 7 and cysteine 10. Residues 22 to 45 (PGALTWLLCTTLFLFGYVLGCCFL) are membrane-binding amphipathic helix. Zn(2+) is bound by residues cysteine 59 and cysteine 62.

This sequence belongs to the CDIP1/LITAF family.

It is found in the membrane. The polypeptide is LITAF domain-containing protein (Homo sapiens (Human)).